The following is a 129-amino-acid chain: Small ribosomal subunit protein uS11 (129 aa).

It belongs to the universal ribosomal protein uS11 family. In terms of assembly, part of the 30S ribosomal subunit. Interacts with proteins S7 and S18. Binds to IF-3.

Located on the platform of the 30S subunit, it bridges several disparate RNA helices of the 16S rRNA. Forms part of the Shine-Dalgarno cleft in the 70S ribosome. This is Small ribosomal subunit protein uS11 from Bartonella henselae (strain ATCC 49882 / DSM 28221 / CCUG 30454 / Houston 1) (Rochalimaea henselae).